The primary structure comprises 528 residues: Dihydromonacolin L monooxygenase LovA (528 aa).

Topologically, residues 1-23 (MTVDALTQPHHLLSLAWNDTQQH) are cytoplasmic. A helical; Signal-anchor for type II membrane protein transmembrane segment spans residues 24-44 (GSWFAPLVTTSAGLLCLLLYL). Residues 45 to 528 (CSSGRRSELP…DEDIRLPGSL (484 aa)) are Lumenal-facing. A glycan (N-linked (GlcNAc...) asparagine) is linked at N399. C465 is a heme binding site.

Belongs to the cytochrome P450 family. Heme is required as a cofactor.

The protein localises to the membrane. It is found in the endoplasmic reticulum membrane. The catalysed reaction is dihydromonacolin L carboxylate + reduced [NADPH--hemoprotein reductase] + O2 = monacolin L carboxylate + oxidized [NADPH--hemoprotein reductase] + 2 H2O + H(+). The enzyme catalyses monacolin L carboxylate + reduced [NADPH--hemoprotein reductase] + O2 = monacolin J carboxylate + oxidized [NADPH--hemoprotein reductase] + H2O + H(+). Its pathway is polyketide biosynthesis; lovastatin biosynthesis. Dihydromonacolin L monooxygenase; part of the gene cluster that mediates the biosynthesis of lovastatin (also known as mevinolin, mevacor or monacolin K), a hypolipidemic inhibitor of (3S)-hydroxymethylglutaryl-coenzyme A (HMG-CoA) reductase (HMGR). The first step in the biosynthesis of lovastatin is the production of dihydromonacolin L acid by the lovastatin nonaketide synthase lovB and the trans-acting enoyl reductase lovC via condensation of one acetyl-CoA unit and 8 malonyl-CoA units. Dihydromonacolin L acid is released from lovB by the thioesterase lovG. Next, dihydromonacolin L acid is oxidized by the dihydromonacolin L monooxygenase lovA twice to form monacolin J acid. The 2-methylbutyrate moiety of lovastatin is synthesized by the lovastatin diketide synthase lovF via condensation of one acetyl-CoA unit and one malonyl-CoA unit. Finally, the covalent attachment of this moiety to monacolin J acid is catalyzed by the transesterase lovD to yield lovastatin. LovD has broad substrate specificity and can also convert monacolin J to simvastatin using alpha-dimethylbutanoyl-S-methyl-3-mercaptopropionate (DMB-S-MMP) as the thioester acyl donor, and can also catalyze the reverse reaction and function as hydrolase in vitro. LovD has much higher activity with LovF-bound 2-methylbutanoate than with free diketide substrates. This chain is Dihydromonacolin L monooxygenase LovA, found in Aspergillus terreus (strain NIH 2624 / FGSC A1156).